A 94-amino-acid chain; its full sequence is Small ribosomal subunit protein uS17 (94 aa).

Positions 1–22 (MASSSTEGQAAARGRKKSWTGK) are disordered.

It belongs to the universal ribosomal protein uS17 family. Part of the 30S ribosomal subunit.

One of the primary rRNA binding proteins, it binds specifically to the 5'-end of 16S ribosomal RNA. The chain is Small ribosomal subunit protein uS17 from Chlorobium luteolum (strain DSM 273 / BCRC 81028 / 2530) (Pelodictyon luteolum).